Reading from the N-terminus, the 54-residue chain is Relaxin (54 aa).

A Pyrrolidone carboxylic acid modification is found at Gln-1. Intrachain disulfides connect Cys-13–Cys-41, Cys-25–Cys-54, and Cys-40–Cys-45.

It belongs to the insulin family. As to quaternary structure, heterodimer of a B chain and an A chain linked by two disulfide bonds.

The protein localises to the secreted. Its function is as follows. The function of relaxin in an oviparous species is not yet known. This chain is Relaxin, found in Squalus acanthias (Spiny dogfish).